A 559-amino-acid polypeptide reads, in one-letter code: MGDVKESKMQITPETPGRIPVLNPFESPSDYSNLHEQTLASPSVFKSTKLPTPGKFRWSIDQLAVINPVEIDPEDIHRQALYLSHSRIDKDVEDKRQKAIEEFFTKDVIVPSPWTDHEGKQLSQCHSSKCTNINSDSPVGKKLTIHSEKSDAACQTLLSLPVDFNLENILGDYFRADEFADQSPGNLSSSSLRRKLFLDGNGSISDSLPSASPGSPHSGVQTSLEMFYSIDLSPVKCRSPLQTPSSGQFSSSPIQASAKKYSLGSITSPSPISSPTFSPIEFQIGETPLSEQRKFTVHSPDASSGTNSNGITNPCIRSPYIDGCSPIKNWSPMRLQMYSGGTQYRTSVIQIPFTLETQGEDEEDKENIPSTDVSSPAMDAAGIHLRQFSNEASTHGTHLVVTAMSVTQNQSSASEKELALLQDVEREKDNNTVDMVDPIEIADETTWIKEPVDNGSLPMTDFVSGIAFSIENSHMCMSPLAESSVIPCESSNIQMDSGYNTQNCGSNIMDTVGAESYCKESDAQTCEVESKSQAFNMKQDHTTQRCWMKTASPFQCSSP.

The segment at 1–27 is disordered; it reads MGDVKESKMQITPETPGRIPVLNPFES. Serine 183, serine 191, serine 270, serine 325, and serine 331 each carry phosphoserine. Phosphothreonine is present on threonine 354.

This sequence belongs to the BORA family. Interacts with AURKA. In terms of processing, phosphorylated by AURKA.

Required for the activation of AURKA at the onset of mitosis. The chain is Protein aurora borealis (BORA) from Homo sapiens (Human).